Consider the following 131-residue polypeptide: MKLLLTLLLGSALMCITLADECGLGTHRPVKEVIDNVRTMYYCDCRAGDAERSITVSRCDDNNQKQDDVILTYCGLEQTTGCNTNPYTAAKHDSSGDKPQFYCSCLNYKYEQSHADSRYWTIRCYMGDICD.

The N-terminal stretch at 1–19 (MKLLLTLLLGSALMCITLA) is a signal peptide. Positions 20–38 (DECGLGTHRPVKEVIDNVR) are excised as a propeptide.

Contains 4 disulfide bonds. Expressed by the venom duct.

It localises to the secreted. In terms of biological role, probable neurotoxin with unknown target. Possibly targets ion channels. The chain is Conotoxin Cal8.2 from Californiconus californicus (California cone).